A 1005-amino-acid chain; its full sequence is Translocated actin-recruiting phosphoprotein (1005 aa).

A compositionally biased stretch (polar residues) spans 1–10; it reads MTNSISGYQP. 6 disordered regions span residues 1-36, 73-155, 487-521, 542-626, 671-749, and 792-847; these read MTNSISGYQPTVTTSTSSTTSASGASGSLGASSVST, APNV…SNYD, INWGTQAGPSSEDDGISFSNETPGAGPAAAPSPTP, DTNV…DGPA, GSAQ…GPSG, and TGTS…TSLM. Composition is skewed to low complexity over residues 11 to 36 and 73 to 121; these read TVTTSTSSTTSASGASGSLGASSVST and APNV…SSDH. The segment covering 130–154 has biased composition (polar residues); sequence GSNSGDISNNYDDVGSNNGDISSNY. Low complexity-rich tracts occupy residues 542–578, 593–612, 720–736, and 831–846; these read DTNVNTTNTTPTTQSTDASTDTSDIDDINTNNQTDDI, GDISETESSSGDDSGSVSSS, SSSGDESGGVSSPSSES, and STTTLRTGTGATTTSL.

It belongs to the chlamydial CPn_0572/CT_456/TC_0741 family. In terms of processing, phosphorylated on a tyrosine on attachment to the host cell. Tyrosine phosphorylation is temporally and spatially associated with recruitment of actin to the site of chlamydial entry. Phosphorylated Tarp seems to remain cytoplasmically exposed on the inclusion membrane at one side of internalized elementary bodies for several hours after entry.

Its subcellular location is the secreted. In terms of biological role, appears to initiate or participate in signaling events that regulate the actin recruitment, which ultimately leads to internalization. The chain is Translocated actin-recruiting phosphoprotein (tarP) from Chlamydia trachomatis serovar D (strain ATCC VR-885 / DSM 19411 / UW-3/Cx).